Consider the following 113-residue polypeptide: Protein translation factor SUI1 homolog (113 aa).

Belongs to the SUI1 family.

In terms of biological role, probably involved in translation. The chain is Protein translation factor SUI1 homolog from Spuriopimpinella brachycarpa (Chamnamul).